The following is a 245-amino-acid chain: MIFVQQFEEVRLILEKAKKITVLTGAGASTESGIPDFRSANGLYADANVEMYLSRGYYNRSPKEFWKHYKEIFQINTFHQYKPNRGHRFLAELEEQGKDITILTQNIDGLHQVGGSKHVIDLHGTLQTAHCPKCKTGYDLQYMIDHEVPRCQKCNFILNPDVVLYGDTLPQYQNAVKRLYETDVLIVMGTSLKVQPVASFPEIAKREVGATTVLVNEELTGQEYNFDYVFQNKIGEFVEGLSSRK.

The region spanning methionine 1–lysine 245 is the Deacetylase sirtuin-type domain. Alanine 26, threonine 30, phenylalanine 37, arginine 38, glutamine 105, isoleucine 107, aspartate 108, and histidine 123 together coordinate NAD(+). Residue phenylalanine 37 participates in nicotinamide binding. Nicotinamide is bound by residues isoleucine 107 and aspartate 108. Histidine 123 (proton acceptor) is an active-site residue. The Zn(2+) site is built by cysteine 131, cysteine 134, cysteine 151, and cysteine 154. Positions 190, 191, 216, and 234 each coordinate NAD(+).

The protein belongs to the sirtuin family. Class U subfamily. Zn(2+) serves as cofactor.

It is found in the cytoplasm. The catalysed reaction is N(6)-acetyl-L-lysyl-[protein] + NAD(+) + H2O = 2''-O-acetyl-ADP-D-ribose + nicotinamide + L-lysyl-[protein]. Functionally, NAD-dependent protein deacetylase which modulates the activities of several enzymes which are inactive in their acetylated form. The sequence is that of NAD-dependent protein deacetylase from Bacillus cereus (strain ZK / E33L).